Here is a 423-residue protein sequence, read N- to C-terminus: Serine--tRNA ligase (423 aa).

An L-serine-binding site is contributed by 231 to 233; that stretch reads TAE. Residue 262–264 participates in ATP binding; it reads RSE. Glutamate 285 contributes to the L-serine binding site. An ATP-binding site is contributed by 349-352; the sequence is EISS. Serine 384 is a binding site for L-serine.

This sequence belongs to the class-II aminoacyl-tRNA synthetase family. Type-1 seryl-tRNA synthetase subfamily. As to quaternary structure, homodimer. The tRNA molecule binds across the dimer.

Its subcellular location is the cytoplasm. The catalysed reaction is tRNA(Ser) + L-serine + ATP = L-seryl-tRNA(Ser) + AMP + diphosphate + H(+). It carries out the reaction tRNA(Sec) + L-serine + ATP = L-seryl-tRNA(Sec) + AMP + diphosphate + H(+). The protein operates within aminoacyl-tRNA biosynthesis; selenocysteinyl-tRNA(Sec) biosynthesis; L-seryl-tRNA(Sec) from L-serine and tRNA(Sec): step 1/1. Its function is as follows. Catalyzes the attachment of serine to tRNA(Ser). Is also able to aminoacylate tRNA(Sec) with serine, to form the misacylated tRNA L-seryl-tRNA(Sec), which will be further converted into selenocysteinyl-tRNA(Sec). In Lactococcus lactis subsp. cremoris (strain MG1363), this protein is Serine--tRNA ligase.